Reading from the N-terminus, the 565-residue chain is MTKIDLLVKNAHVFNVYLRKFEDVNITIKDGKFYWINKELPGIEAAKVIDLQGKYVIPGFVDAHMHIDSSMTTPKVMGQTIGKYGTTTIIADDHEITNVAGVKGLKDFIDEKAPIDIFFGIPSSVPSTNPNMETTGGLIGVKETEELLKDPRFVCLGEVMNFKDMTSDHDTLIKKIIAACRKARPTMPLEGHVPAYHSEDLAKVIYAGITTDHTQQTSSLVDEKIRSGMFVEIQLKSMHQEVIDTVIEHGYFEHVALVTDDSMPDTLLKGHLNLLVKKAIDMGMRPEDAIYISTYTPARHMGLWDRGAIAPGRVADFIVLNNLEDLSIAQVYKNGLPFAAKDEKDNNVYPEELLHSVKAPKLSEADFDLKTDLVQNGKVVANIIQINEVGTFTNHIQKCLEVKDGHVQWKKAGLALMLCQERYGKNEGRYAFALIDRGIVGDGAIGATWAHDHHNLIILGTNIAGMVSVQNLLVEEQGGYIAAKGSQIVANAPLPLGGVVSLEPMSVLGKQISKVRETMVDLGYKNTNEIMSFSTLSLLVSPTLKISDKGIFEVKTQRHIPLFEC.

It belongs to the metallo-dependent hydrolases superfamily. Adenine deaminase family. Mn(2+) serves as cofactor.

It carries out the reaction adenine + H2O + H(+) = hypoxanthine + NH4(+). The sequence is that of Adenine deaminase from Lactobacillus delbrueckii subsp. bulgaricus (strain ATCC 11842 / DSM 20081 / BCRC 10696 / JCM 1002 / NBRC 13953 / NCIMB 11778 / NCTC 12712 / WDCM 00102 / Lb 14).